Consider the following 340-residue polypeptide: GTP 3',8-cyclase (340 aa).

One can recognise a Radical SAM core domain in the interval 8 to 227; sequence KLGRPIRDLR…EMIEQNFDIE (220 aa). GTP is bound at residue Arg-17. [4Fe-4S] cluster contacts are provided by Cys-24 and Cys-28. Residue Tyr-30 coordinates S-adenosyl-L-methionine. Residue Cys-31 participates in [4Fe-4S] cluster binding. Arg-71 contributes to the GTP binding site. An S-adenosyl-L-methionine-binding site is contributed by Gly-75. Thr-102 is a binding site for GTP. S-adenosyl-L-methionine is bound at residue Ser-126. Lys-163 contributes to the GTP binding site. Met-197 serves as a coordination point for S-adenosyl-L-methionine. Residues Cys-261 and Cys-264 each contribute to the [4Fe-4S] cluster site. Residue 266 to 268 coordinates GTP; sequence RAR. [4Fe-4S] cluster is bound at residue Cys-278.

The protein belongs to the radical SAM superfamily. MoaA family. Monomer and homodimer. [4Fe-4S] cluster serves as cofactor.

The enzyme catalyses GTP + AH2 + S-adenosyl-L-methionine = (8S)-3',8-cyclo-7,8-dihydroguanosine 5'-triphosphate + 5'-deoxyadenosine + L-methionine + A + H(+). The protein operates within cofactor biosynthesis; molybdopterin biosynthesis. Catalyzes the cyclization of GTP to (8S)-3',8-cyclo-7,8-dihydroguanosine 5'-triphosphate. This Staphylococcus saprophyticus subsp. saprophyticus (strain ATCC 15305 / DSM 20229 / NCIMB 8711 / NCTC 7292 / S-41) protein is GTP 3',8-cyclase.